Here is a 163-residue protein sequence, read N- to C-terminus: Transcription elongation factor GreB (163 aa).

The stretch at G54–V76 forms a coiled coil.

Belongs to the GreA/GreB family. GreB subfamily.

Necessary for efficient RNA polymerase transcription elongation past template-encoded arresting sites. The arresting sites in DNA have the property of trapping a certain fraction of elongating RNA polymerases that pass through, resulting in locked ternary complexes. Cleavage of the nascent transcript by cleavage factors such as GreA or GreB allows the resumption of elongation from the new 3'terminus. GreB releases sequences of up to 9 nucleotides in length. The chain is Transcription elongation factor GreB from Neisseria meningitidis serogroup B (strain ATCC BAA-335 / MC58).